Reading from the N-terminus, the 621-residue chain is F-box/LRR-repeat protein 4 (621 aa).

R28 carries the asymmetric dimethylarginine modification. Residues 277–332 (NGYFDKLPYELIQLILNHLSLPDLCRLAQTCRLLHQHCCDPLQYIHLNLQPYWARL) form the F-box domain. 9 LRR repeats span residues 376 to 397 (ELVR…EVIS), 402 to 421 (NLQD…AFGH), 427 to 448 (SLKR…SILN), 452 to 474 (ELQH…ASMI), 480 to 501 (NLRT…AELA), 504 to 524 (CVLL…STGC), 532 to 558 (LPNL…ASNC), 559 to 583 (TRLQ…LLES), and 584 to 609 (CKDL…LNAS).

In terms of assembly, part of a SCF (SKP1-CUL1-F-box) protein ligase complex. Interacts with FAF2 and VCP. Interacts with PPTC7; this interaction promotes destruction of BNIP3 and NIX and mitophagy suppression.

It is found in the cytoplasm. It localises to the nucleus. Its subcellular location is the mitochondrion outer membrane. Functionally, substrate-recognition component of the mitochondria-localized SCF-FBXL4 ubiquitin E3 ligase complex that plays a role in the restriction of mitophagy by controlling the degradation of BNIP3 and NIX mitophagy receptors. Also rescues mitochondrial injury through reverting hyperactivation of DRP1-mediated mitochondrial fission. The chain is F-box/LRR-repeat protein 4 (Fbxl4) from Mus musculus (Mouse).